A 483-amino-acid polypeptide reads, in one-letter code: Regulatory protein ViaA (483 aa).

This sequence belongs to the ViaA family. Homodimer. Interacts with RavA.

It localises to the cytoplasm. Component of the RavA-ViaA chaperone complex, which may act on the membrane to optimize the function of some of the respiratory chains. ViaA stimulates the ATPase activity of RavA. The sequence is that of Regulatory protein ViaA from Salmonella agona (strain SL483).